The chain runs to 133 residues: MATNRRVSRVAELIKREVSQMLINGIKDDRVGTGMVSVTDVDVSGDLQHAKIYVSIYGTEEAKAETMAGLKSATGFVRSELGARVRLRRTPEVTFIEDRSIERGTKVLTLLNKLENARSLDDIPSADDSLDED.

The protein belongs to the RbfA family. In terms of assembly, monomer. Binds 30S ribosomal subunits, but not 50S ribosomal subunits or 70S ribosomes.

The protein localises to the cytoplasm. One of several proteins that assist in the late maturation steps of the functional core of the 30S ribosomal subunit. Associates with free 30S ribosomal subunits (but not with 30S subunits that are part of 70S ribosomes or polysomes). Required for efficient processing of 16S rRNA. May interact with the 5'-terminal helix region of 16S rRNA. The protein is Ribosome-binding factor A of Trichormus variabilis (strain ATCC 29413 / PCC 7937) (Anabaena variabilis).